The sequence spans 82 residues: Ice-structuring protein A (82 aa).

A signal peptide spans 1–23; sequence MALSLFTVGQLIFLFWTMRITEA. The propeptide at 24–44 is removed by a dipeptidylpeptidase; the sequence is SPDPAAKAAPAAAAAPAAAAP. The residue at position 81 (R81) is an Arginine amide.

Belongs to the type-I AFP family. As to expression, detected in liver and in blood serum (at protein level).

It is found in the secreted. Contributes to protect fish blood from freezing at subzero sea water temperatures. Lowers the blood freezing point. Binds to nascent ice crystals and prevents further growth. This is Ice-structuring protein A from Pseudopleuronectes americanus (Winter flounder).